The chain runs to 501 residues: Ribose import ATP-binding protein RbsA (501 aa).

ABC transporter domains are found at residues 8-245 (LKMV…VGRT) and 255-500 (VKKG…VGIN). Residue 40-47 (GENGAGKS) participates in ATP binding.

The protein belongs to the ABC transporter superfamily. Ribose importer (TC 3.A.1.2.1) family. In terms of assembly, the complex is composed of an ATP-binding protein (RbsA), two transmembrane proteins (RbsC) and a solute-binding protein (RbsB).

The protein resides in the cell membrane. The enzyme catalyses D-ribose(out) + ATP + H2O = D-ribose(in) + ADP + phosphate + H(+). In terms of biological role, part of the ABC transporter complex RbsABC involved in ribose import. Responsible for energy coupling to the transport system. The sequence is that of Ribose import ATP-binding protein RbsA from Clostridium perfringens (strain SM101 / Type A).